The sequence spans 88 residues: Translation initiation factor IF-1 3 (88 aa).

An S1-like domain is found at 1–72 (MAKEELLELD…TKGCINFRHK (72 aa)).

It belongs to the IF-1 family. As to quaternary structure, component of the 30S ribosomal translation pre-initiation complex which assembles on the 30S ribosome in the order IF-2 and IF-3, IF-1 and N-formylmethionyl-tRNA(fMet); mRNA recruitment can occur at any time during PIC assembly.

The protein resides in the cytoplasm. Functionally, one of the essential components for the initiation of protein synthesis. Stabilizes the binding of IF-2 and IF-3 on the 30S subunit to which N-formylmethionyl-tRNA(fMet) subsequently binds. Helps modulate mRNA selection, yielding the 30S pre-initiation complex (PIC). Upon addition of the 50S ribosomal subunit IF-1, IF-2 and IF-3 are released leaving the mature 70S translation initiation complex. The polypeptide is Translation initiation factor IF-1 3 (Burkholderia orbicola (strain AU 1054)).